The sequence spans 147 residues: Methylmalonyl-CoA mutase homolog (147 aa).

The protein to methylmalonyl-CoA mutase.

The protein is Methylmalonyl-CoA mutase homolog of Alkalihalophilus pseudofirmus (strain ATCC BAA-2126 / JCM 17055 / OF4) (Bacillus pseudofirmus).